Consider the following 700-residue polypeptide: Elongation factor G 1 (700 aa).

One can recognise a tr-type G domain in the interval 8-290 (ERYRNIGISA…AVIDYLPSPA (283 aa)). Residues 17-24 (AHIDAGKT), 88-92 (DTPGH), and 142-145 (NKMD) contribute to the GTP site.

Belongs to the TRAFAC class translation factor GTPase superfamily. Classic translation factor GTPase family. EF-G/EF-2 subfamily.

Its subcellular location is the cytoplasm. Catalyzes the GTP-dependent ribosomal translocation step during translation elongation. During this step, the ribosome changes from the pre-translocational (PRE) to the post-translocational (POST) state as the newly formed A-site-bound peptidyl-tRNA and P-site-bound deacylated tRNA move to the P and E sites, respectively. Catalyzes the coordinated movement of the two tRNA molecules, the mRNA and conformational changes in the ribosome. The protein is Elongation factor G 1 of Bordetella parapertussis (strain 12822 / ATCC BAA-587 / NCTC 13253).